Reading from the N-terminus, the 203-residue chain is GTP-binding protein rho4 (203 aa).

Position 21 to 28 (21 to 28) interacts with GTP; that stretch reads GDGGCGKT. Positions 43 to 51 match the Effector region motif; it reads YVPTVFENY. 70–74 is a binding site for GTP; that stretch reads DTAGQ. Cysteine methyl ester is present on C200. C200 carries S-geranylgeranyl cysteine lipidation. A propeptide spans 201 to 203 (removed in mature form); the sequence is VIL.

The protein belongs to the small GTPase superfamily. Rho family.

Its subcellular location is the membrane. Required for cell separation. Involved in the regulation of the septum degradation during cytokinesis and in the organization of F-actin patches and cytoplasmic microtubules. In Schizosaccharomyces pombe (strain 972 / ATCC 24843) (Fission yeast), this protein is GTP-binding protein rho4 (rho4).